Reading from the N-terminus, the 100-residue chain is Small ribosomal subunit protein uS14c (100 aa).

Belongs to the universal ribosomal protein uS14 family. As to quaternary structure, part of the 30S ribosomal subunit.

It is found in the plastid. The protein localises to the chloroplast. Its function is as follows. Binds 16S rRNA, required for the assembly of 30S particles. The chain is Small ribosomal subunit protein uS14c from Angiopteris evecta (Mule's foot fern).